Here is a 388-residue protein sequence, read N- to C-terminus: Putative 8-amino-7-oxononanoate synthase (388 aa).

Position 18 (Arg-18) interacts with substrate. 105-106 (GY) is a binding site for pyridoxal 5'-phosphate. Position 130 (His-130) interacts with substrate. Residues Ser-176, 201–204 (DDAH), and 232–235 (TLSK) each bind pyridoxal 5'-phosphate. An N6-(pyridoxal phosphate)lysine modification is found at Lys-235. Thr-349 provides a ligand contact to substrate.

The protein belongs to the class-II pyridoxal-phosphate-dependent aminotransferase family. BioF subfamily. In terms of assembly, homodimer. It depends on pyridoxal 5'-phosphate as a cofactor.

It carries out the reaction 6-carboxyhexanoyl-[ACP] + L-alanine + H(+) = (8S)-8-amino-7-oxononanoate + holo-[ACP] + CO2. It functions in the pathway cofactor biosynthesis; biotin biosynthesis. Functionally, catalyzes the decarboxylative condensation of pimeloyl-[acyl-carrier protein] and L-alanine to produce 8-amino-7-oxononanoate (AON), [acyl-carrier protein], and carbon dioxide. The polypeptide is Putative 8-amino-7-oxononanoate synthase (bioF) (Acetivibrio thermocellus (strain ATCC 27405 / DSM 1237 / JCM 9322 / NBRC 103400 / NCIMB 10682 / NRRL B-4536 / VPI 7372) (Clostridium thermocellum)).